A 182-amino-acid chain; its full sequence is Translation initiation factor IF-3 (182 aa).

The tract at residues 1-22 (MPLGDCNISTPDNKQNRKNQEI) is disordered.

It belongs to the IF-3 family. In terms of assembly, monomer.

It localises to the cytoplasm. In terms of biological role, IF-3 binds to the 30S ribosomal subunit and shifts the equilibrium between 70S ribosomes and their 50S and 30S subunits in favor of the free subunits, thus enhancing the availability of 30S subunits on which protein synthesis initiation begins. This is Translation initiation factor IF-3 from Xanthomonas axonopodis pv. citri (strain 306).